The chain runs to 1063 residues: Exportin-1 (1063 aa).

Positions 43 to 109 (AQSILTTLKE…KKYVVSLIIK (67 aa)) constitute an Importin N-terminal domain. A disordered region spans residues 1034–1063 (AEEQSNKHQMQRNIPGMLNPHELPEDMQDE).

Belongs to the exportin family. Interacts with Clbn (via its N-terminus). Associates with the nuclear pore complex via interaction with mbo and Nup214. Interacts with target proteins containing NES sequences such as actin and dl. High expression observed in the developing embryonic brain, hind gut and posterior spiracles shortly before dorsal closure; and in the ventral nerve cord, midgut and somatic musculature shortly after dorsal closure. Expression increases when the tissue is well developed.

It is found in the nucleus. The protein localises to the nucleus membrane. Receptor for the leucine-rich nuclear export signal (NES). Binds cooperatively to the NES on its target protein and to the small GTPase Ran in its active GTP-bound form. Involved in the export of dl, RpS2 and the pre-40S ribosome from the nucleus to the cytoplasm. Plays an important role in nuclear pore assembly by mediating nucleoporin condensation and biogenesis of annulate lamellae. Required for the function or maintenance of certain tissues such as brain and gut. The protein is Exportin-1 of Drosophila melanogaster (Fruit fly).